A 424-amino-acid polypeptide reads, in one-letter code: Subtilisin-like protease 2 (424 aa).

Positions 1 to 17 (MQLLNLGLLLLLPFVAG) are cleaved as a signal peptide. The propeptide occupies 18–123 (EIAPQPEPLR…VHPDQHVYLA (106 aa)). Positions 37 to 123 (QYIVTLKEGL…VHPDQHVYLA (87 aa)) constitute an Inhibitor I9 domain. The Peptidase S8 domain maps to 132 to 424 (RWGLGYMSSK…RKFTLPKNTK (293 aa)). Catalysis depends on charge relay system residues aspartate 170 and histidine 202. N-linked (GlcNAc...) asparagine glycosylation is found at asparagine 249, asparagine 262, and asparagine 350. Serine 359 serves as the catalytic Charge relay system. A glycan (N-linked (GlcNAc...) asparagine) is linked at asparagine 390.

Belongs to the peptidase S8 family.

The protein localises to the secreted. Secreted subtilisin-like serine protease with keratinolytic activity that contributes to pathogenicity. The chain is Subtilisin-like protease 2 (SUB2) from Arthroderma otae (Microsporum canis).